The chain runs to 315 residues: Glutaminase (315 aa).

7 residues coordinate substrate: Ser-70, Asn-120, Glu-166, Asn-173, Tyr-197, Tyr-249, and Val-267.

Belongs to the glutaminase family. Homotetramer.

It catalyses the reaction L-glutamine + H2O = L-glutamate + NH4(+). The chain is Glutaminase from Sinorhizobium fredii (strain NBRC 101917 / NGR234).